The sequence spans 166 residues: MIVYKDMITEDEMFTDSHCPRVVADFFYEVDSRFTTVSSNVDGRLIGANPSGEGGEDENVDDTSKRVIDLVHANGFISVPFDQKSYKAHLNLYLKTIIERLQKTDPDKVPLLKSQVNKYMKNVLDNFDQYEFYMGPPSNPDAMIVLMNFREDGMTPYFVFFKDGLT.

The 166-residue stretch at 1 to 166 folds into the TCTP domain; that stretch reads MIVYKDMITE…YFVFFKDGLT (166 aa).

This sequence belongs to the TCTP family.

The protein localises to the cytoplasm. Functionally, involved in calcium binding and microtubule stabilization. This is Translationally-controlled tumor protein homolog (TCTP) from Schistosoma mansoni (Blood fluke).